We begin with the raw amino-acid sequence, 851 residues long: Putative cell signaling protein (851 aa).

Composition is skewed to basic and acidic residues over residues 165–176 (KLNEQDGKKSDN), 196–223 (DQAREQGSKAKDKIKNDPDAQKAKEETK), and 767–781 (SEERQRSTEDPLSHD). Disordered stretches follow at residues 165–223 (KLNE…EETK) and 714–781 (DDSE…LSHD).

In terms of processing, palmitoylated.

This Schizosaccharomyces pombe (strain 972 / ATCC 24843) (Fission yeast) protein is Putative cell signaling protein.